Reading from the N-terminus, the 234-residue chain is Triosephosphate isomerase (234 aa).

A substrate-binding site is contributed by 8 to 10; it reads NFK. The active-site Electrophile is the His90. Glu159 serves as the catalytic Proton acceptor. Residues Gly165 and Ser197 each coordinate substrate.

It belongs to the triosephosphate isomerase family. Homodimer.

Its subcellular location is the cytoplasm. It carries out the reaction D-glyceraldehyde 3-phosphate = dihydroxyacetone phosphate. Its pathway is carbohydrate biosynthesis; gluconeogenesis. It participates in carbohydrate degradation; glycolysis; D-glyceraldehyde 3-phosphate from glycerone phosphate: step 1/1. In terms of biological role, involved in the gluconeogenesis. Catalyzes stereospecifically the conversion of dihydroxyacetone phosphate (DHAP) to D-glyceraldehyde-3-phosphate (G3P). The polypeptide is Triosephosphate isomerase (Helicobacter pylori (strain G27)).